The chain runs to 370 residues: Histidinol-phosphate aminotransferase 1 (370 aa).

Lysine 229 carries the N6-(pyridoxal phosphate)lysine modification.

Belongs to the class-II pyridoxal-phosphate-dependent aminotransferase family. Histidinol-phosphate aminotransferase subfamily. As to quaternary structure, homodimer. Pyridoxal 5'-phosphate serves as cofactor.

It catalyses the reaction L-histidinol phosphate + 2-oxoglutarate = 3-(imidazol-4-yl)-2-oxopropyl phosphate + L-glutamate. Its pathway is amino-acid biosynthesis; L-histidine biosynthesis; L-histidine from 5-phospho-alpha-D-ribose 1-diphosphate: step 7/9. The protein is Histidinol-phosphate aminotransferase 1 of Nitrosococcus oceani (strain ATCC 19707 / BCRC 17464 / JCM 30415 / NCIMB 11848 / C-107).